Reading from the N-terminus, the 318-residue chain is Thymidylate synthase (318 aa).

Residues Arg25 and 180-181 (RR) each bind dUMP. Cys200 acts as the Nucleophile in catalysis. DUMP contacts are provided by residues 220–223 (RSGD), Asn231, and 261–263 (HIY). Asp223 serves as a coordination point for (6R)-5,10-methylene-5,6,7,8-tetrahydrofolate. Residue Ala317 coordinates (6R)-5,10-methylene-5,6,7,8-tetrahydrofolate.

This sequence belongs to the thymidylate synthase family. Bacterial-type ThyA subfamily. Homodimer.

It localises to the cytoplasm. It carries out the reaction dUMP + (6R)-5,10-methylene-5,6,7,8-tetrahydrofolate = 7,8-dihydrofolate + dTMP. Its pathway is pyrimidine metabolism; dTTP biosynthesis. Functionally, catalyzes the reductive methylation of 2'-deoxyuridine-5'-monophosphate (dUMP) to 2'-deoxythymidine-5'-monophosphate (dTMP) while utilizing 5,10-methylenetetrahydrofolate (mTHF) as the methyl donor and reductant in the reaction, yielding dihydrofolate (DHF) as a by-product. This enzymatic reaction provides an intracellular de novo source of dTMP, an essential precursor for DNA biosynthesis. The polypeptide is Thymidylate synthase (Lactobacillus johnsonii (strain CNCM I-12250 / La1 / NCC 533)).